The chain runs to 643 residues: Threonine--tRNA ligase (643 aa).

Residues 1-61 enclose the TGS domain; the sequence is MPIITLPDGS…TEDSTLEIIT (61 aa). Residues 243–534 form a catalytic region; sequence DHRKIGKALD…ITEEYAGFFP (292 aa). 3 residues coordinate Zn(2+): Cys334, His385, and His511.

The protein belongs to the class-II aminoacyl-tRNA synthetase family. In terms of assembly, homodimer. Zn(2+) is required as a cofactor.

Its subcellular location is the cytoplasm. It carries out the reaction tRNA(Thr) + L-threonine + ATP = L-threonyl-tRNA(Thr) + AMP + diphosphate + H(+). In terms of biological role, catalyzes the attachment of threonine to tRNA(Thr) in a two-step reaction: L-threonine is first activated by ATP to form Thr-AMP and then transferred to the acceptor end of tRNA(Thr). Also edits incorrectly charged L-seryl-tRNA(Thr). This Mannheimia succiniciproducens (strain KCTC 0769BP / MBEL55E) protein is Threonine--tRNA ligase.